Consider the following 191-residue polypeptide: MYALEQKILNEGIVLSDQVLKVDAFLNHQIDPVLMQQIGKEFAARFKDTGITKIVTIEASGIAPAVMAGLELGVPVIFARKYQSLTLKDDLYRSKVFSFTKQVESTIAISNKHINAEDKVLVIDDFLANGQAALGLIDLIHQANADIVGVGIVIEKSFQPGRDLLLEKGYRVESLARVASLTNGQVTFVIE.

Residues leucine 20 and asparagine 27 each coordinate xanthine. 128-132 (ANGQA) lines the 5-phospho-alpha-D-ribose 1-diphosphate pocket. Lysine 156 contributes to the xanthine binding site.

It belongs to the purine/pyrimidine phosphoribosyltransferase family. Xpt subfamily. In terms of assembly, homodimer.

The protein resides in the cytoplasm. It carries out the reaction XMP + diphosphate = xanthine + 5-phospho-alpha-D-ribose 1-diphosphate. It functions in the pathway purine metabolism; XMP biosynthesis via salvage pathway; XMP from xanthine: step 1/1. In terms of biological role, converts the preformed base xanthine, a product of nucleic acid breakdown, to xanthosine 5'-monophosphate (XMP), so it can be reused for RNA or DNA synthesis. The sequence is that of Xanthine phosphoribosyltransferase from Acinetobacter baylyi (strain ATCC 33305 / BD413 / ADP1).